The primary structure comprises 160 residues: Suppressyn (160 aa).

The signal sequence occupies residues 1–39 (MACIYPTTFYTSLPTKSLNMGISLTTILILSVAVLLSTA). Residues 137–160 (AKASKPTTPPENRPRHFHSFIQKL) form a disordered region.

As to quaternary structure, interacts (secreted) with SLC1A5; mainly at cell surface. In terms of tissue distribution, specifically expressed in placenta by extravillous trophoblasts and syncytiotrophoblasts (at protein level).

The protein localises to the secreted. Its function is as follows. May play a role in trophoblasts syncytialization, the spontaneous fusion of their plasma membranes, an essential process in placental development. May negatively regulate cell-cell fusion by interacting with SLC1A5, the probable receptor on the cell surface of the fusogenic syncytin-1/ERVW-1. The sequence is that of Suppressyn (ERVH48-1) from Homo sapiens (Human).